A 136-amino-acid polypeptide reads, in one-letter code: ATP synthase epsilon chain (136 aa).

It belongs to the ATPase epsilon chain family. In terms of assembly, F-type ATPases have 2 components, CF(1) - the catalytic core - and CF(0) - the membrane proton channel. CF(1) has five subunits: alpha(3), beta(3), gamma(1), delta(1), epsilon(1). CF(0) has three main subunits: a, b and c.

Its subcellular location is the cell inner membrane. Functionally, produces ATP from ADP in the presence of a proton gradient across the membrane. This chain is ATP synthase epsilon chain, found in Myxococcus xanthus (strain DK1622).